A 72-amino-acid chain; its full sequence is Neuropeptide SIFamide (72 aa).

The N-terminal stretch at 1 to 26 (MALRFTLTLLLVTILVAAILLGSSEA) is a signal peptide. Asparagine 34 carries N-linked (GlcNAc...) asparagine glycosylation. The residue at position 38 (phenylalanine 38) is a Phenylalanine amide. A propeptide spanning residues 42 to 72 (NSLDYDSAKMSAVCEVAMEACPMWFPQNDSK) is cleaved from the precursor.

It belongs to the FARP (FMRFamide related peptide) family. Strongly expressed in two pairs of neurons in the pars intercerebralis (at protein level).

The protein localises to the secreted. In terms of biological role, ligand for the neuropeptide SIFamide receptor. Modulates sexual behavior by negatively regulating female receptivity to male courtship and by playing a role in male sex discrimination. Also involved in promoting sleep. This is Neuropeptide SIFamide from Drosophila melanogaster (Fruit fly).